Here is a 100-residue protein sequence, read N- to C-terminus: Small ribosomal subunit protein uS14c (100 aa).

This sequence belongs to the universal ribosomal protein uS14 family. In terms of assembly, part of the 30S ribosomal subunit.

Its subcellular location is the plastid. It is found in the chloroplast. Binds 16S rRNA, required for the assembly of 30S particles. The sequence is that of Small ribosomal subunit protein uS14c from Huperzia lucidula (Shining clubmoss).